The chain runs to 520 residues: Maturase K (520 aa).

Belongs to the intron maturase 2 family. MatK subfamily.

It is found in the plastid. The protein localises to the chloroplast. Functionally, usually encoded in the trnK tRNA gene intron. Probably assists in splicing its own and other chloroplast group II introns. The polypeptide is Maturase K (Beaucarnea recurvata (Elephant-foot tree)).